The sequence spans 358 residues: S-adenosylmethionine:tRNA ribosyltransferase-isomerase (358 aa).

It belongs to the QueA family. In terms of assembly, monomer.

It is found in the cytoplasm. The enzyme catalyses 7-aminomethyl-7-carbaguanosine(34) in tRNA + S-adenosyl-L-methionine = epoxyqueuosine(34) in tRNA + adenine + L-methionine + 2 H(+). Its pathway is tRNA modification; tRNA-queuosine biosynthesis. Transfers and isomerizes the ribose moiety from AdoMet to the 7-aminomethyl group of 7-deazaguanine (preQ1-tRNA) to give epoxyqueuosine (oQ-tRNA). In Desulfotalea psychrophila (strain LSv54 / DSM 12343), this protein is S-adenosylmethionine:tRNA ribosyltransferase-isomerase.